The chain runs to 327 residues: MRASIWGTGSYLPKKILTNADLEKIVETSDEWISTRTGIKERRIASAEEFSSFMGAKAAEKAIEAAKISKSQVDCIVFSTAAPDYIFPSSAALAQAYLGIKEIPAFDCLAACTGFLYGLSIAKAYVESGMYQCVLVIAADKLSSFVNYQDRNTCVLFGDGGSACIVGHSRPGALEISKVNLGADGKQGDLLRLPAGGSRCPASQDTVQNHQHFITMEGKEVFKHAVRRMEFAAKTCITEAGLQEKDIDWLVPHQANERIIDAIAKRFAVKDSRVFKTLAKYGNTAASSVGIALDELLRTHDIHVAERLLLVAFGGGLSWGAVILQQV.

Residues C112 and H253 contribute to the active site. The ACP-binding stretch occupies residues 254 to 258 (QANER). N283 is an active-site residue.

This sequence belongs to the thiolase-like superfamily. FabH family. As to quaternary structure, homodimer.

Its subcellular location is the cytoplasm. It catalyses the reaction malonyl-[ACP] + acetyl-CoA + H(+) = 3-oxobutanoyl-[ACP] + CO2 + CoA. The protein operates within lipid metabolism; fatty acid biosynthesis. Its function is as follows. Catalyzes the condensation reaction of fatty acid synthesis by the addition to an acyl acceptor of two carbons from malonyl-ACP. Catalyzes the first condensation reaction which initiates fatty acid synthesis and may therefore play a role in governing the total rate of fatty acid production. Possesses both acetoacetyl-ACP synthase and acetyl transacylase activities. Its substrate specificity determines the biosynthesis of branched-chain and/or straight-chain of fatty acids. This Chlamydia trachomatis serovar A (strain ATCC VR-571B / DSM 19440 / HAR-13) protein is Beta-ketoacyl-[acyl-carrier-protein] synthase III.